The primary structure comprises 134 residues: MIFSMLRKLPKVTCRDVLPEIRAICIEEIGCWMQSYSTSFLTDSYLKYIGWTLHDKHREVRVKCVKALKGLYGNRDLTARLELFTGRFKDWMVSMIVDREYSVAVEAVRLLILILKNMEGVLMDVDCESVYPIV.

One can recognise an SCD domain in the interval 10 to 95 (PKVTCRDVLP…GRFKDWMVSM (86 aa)).

The protein belongs to the SCC3 family.

The protein localises to the nucleus. The chain is Putative STAG3-like protein 2 (STAG3L2) from Homo sapiens (Human).